The chain runs to 535 residues: MTKYIFVTGGVVSSLGKGITAASLGRLLKNRGLNVTIQKFDPYINVDPGTMSPYQHGEVFVTDDGAETDLDLGHYERFIDINLNKYSNVTTGKIYSSVLQKERRGEYLGGTVQVIPHITNEIKERVYRSGRETNADVVITEIGGTVGDIESLPFLEAIRQIKSDIGRDNVMYIHCTLIPYLKAAGEMKTKPTQHSVKELRSLGIQPNIIVVRTELPVSQDMKDKLALFCDIDTKAVIEARDADTLYAVPLSLQEQNMDQIVCDHLKLDNPAADMTDWTALVNKVRNLSKKTKIALVGKYVELQDAYISVVEALRHAGYSFDTDVEVKWVNAEHVTAENVKELVGDTDGILVPGGFGDRGVEGKIVAIQYARENKVPFLGICLGMQLASIEFARNVLGLEGANSSEINPDTPYAIIDLLPEQKDVEDLGGTLRLGLYPCKLAEETNAYNAYNEPVVYERHRHRYEFNNQFRPDMEKAGFVFSGTSPDGRLVEIIELQDHPWFVAAQFHPELVSRPNRPQPLFHDFVSASITNKESK.

Positions 1 to 267 (MTKYIFVTGG…DQIVCDHLKL (267 aa)) are amidoligase domain. Serine 13 contributes to the CTP binding site. A UTP-binding site is contributed by serine 13. 14–19 (SLGKGI) is a binding site for ATP. Tyrosine 54 contacts L-glutamine. Aspartate 71 is a binding site for ATP. Aspartate 71 and glutamate 141 together coordinate Mg(2+). CTP-binding positions include 148-150 (DIE), 188-193 (KTKPTQ), and lysine 224. Residues 188-193 (KTKPTQ) and lysine 224 each bind UTP. ATP is bound at residue 240-242 (RDA). The Glutamine amidotransferase type-1 domain occupies 292–534 (KIALVGKYVE…VSASITNKES (243 aa)). Glycine 354 lines the L-glutamine pocket. Cysteine 381 (nucleophile; for glutamine hydrolysis) is an active-site residue. Residues 382–385 (LGMQ), glutamate 405, and arginine 462 contribute to the L-glutamine site. Active-site residues include histidine 507 and glutamate 509.

It belongs to the CTP synthase family. As to quaternary structure, homotetramer.

It carries out the reaction UTP + L-glutamine + ATP + H2O = CTP + L-glutamate + ADP + phosphate + 2 H(+). It catalyses the reaction L-glutamine + H2O = L-glutamate + NH4(+). The catalysed reaction is UTP + NH4(+) + ATP = CTP + ADP + phosphate + 2 H(+). It participates in pyrimidine metabolism; CTP biosynthesis via de novo pathway; CTP from UDP: step 2/2. Allosterically activated by GTP, when glutamine is the substrate; GTP has no effect on the reaction when ammonia is the substrate. The allosteric effector GTP functions by stabilizing the protein conformation that binds the tetrahedral intermediate(s) formed during glutamine hydrolysis. Inhibited by the product CTP, via allosteric rather than competitive inhibition. Catalyzes the ATP-dependent amination of UTP to CTP with either L-glutamine or ammonia as the source of nitrogen. Regulates intracellular CTP levels through interactions with the four ribonucleotide triphosphates. This Bacillus mycoides (strain KBAB4) (Bacillus weihenstephanensis) protein is CTP synthase.